The following is a 121-amino-acid chain: Large ribosomal subunit protein uL22 (121 aa).

This sequence belongs to the universal ribosomal protein uL22 family. Part of the 50S ribosomal subunit.

Its function is as follows. This protein binds specifically to 23S rRNA; its binding is stimulated by other ribosomal proteins, e.g. L4, L17, and L20. It is important during the early stages of 50S assembly. It makes multiple contacts with different domains of the 23S rRNA in the assembled 50S subunit and ribosome. In terms of biological role, the globular domain of the protein is located near the polypeptide exit tunnel on the outside of the subunit, while an extended beta-hairpin is found that lines the wall of the exit tunnel in the center of the 70S ribosome. This is Large ribosomal subunit protein uL22 from Synechococcus sp. (strain CC9902).